Here is a 349-residue protein sequence, read N- to C-terminus: Cytoplasmic tRNA 2-thiolation protein 2 (349 aa).

The protein belongs to the CTU2/NCS2 family.

The protein resides in the cytoplasm. Its pathway is tRNA modification; 5-methoxycarbonylmethyl-2-thiouridine-tRNA biosynthesis. Plays a central role in 2-thiolation of mcm(5)S(2)U at tRNA wobble positions of tRNA(Lys), tRNA(Glu) and tRNA(Gln). May act by forming a heterodimer with tut-1/ctu-1 that ligates sulfur from thiocarboxylated urm-1 onto the uridine of tRNAs at wobble position. This Caenorhabditis elegans protein is Cytoplasmic tRNA 2-thiolation protein 2.